We begin with the raw amino-acid sequence, 468 residues long: 6-phospho-beta-galactosidase (468 aa).

Residues glutamine 19, histidine 116, asparagine 159, glutamate 160, and asparagine 297 each coordinate D-galactose 6-phosphate. Glutamate 160 functions as the Proton donor in the catalytic mechanism. Catalysis depends on glutamate 375, which acts as the Nucleophile. Residues serine 428, tryptophan 429, lysine 435, and tyrosine 437 each coordinate D-galactose 6-phosphate.

It belongs to the glycosyl hydrolase 1 family.

The catalysed reaction is a 6-phospho-beta-D-galactoside + H2O = D-galactose 6-phosphate + an alcohol. Its pathway is carbohydrate metabolism; lactose degradation; D-galactose 6-phosphate and beta-D-glucose from lactose 6-phosphate: step 1/1. The protein is 6-phospho-beta-galactosidase of Streptococcus mutans serotype c (strain ATCC 700610 / UA159).